Here is a 125-residue protein sequence, read N- to C-terminus: Small ribosomal subunit protein uS13 (125 aa).

This sequence belongs to the universal ribosomal protein uS13 family. Part of the 30S ribosomal subunit. Forms a loose heterodimer with protein S19. Forms two bridges to the 50S subunit in the 70S ribosome.

Functionally, located at the top of the head of the 30S subunit, it contacts several helices of the 16S rRNA. In the 70S ribosome it contacts the 23S rRNA (bridge B1a) and protein L5 of the 50S subunit (bridge B1b), connecting the 2 subunits; these bridges are implicated in subunit movement. Contacts the tRNAs in the A and P-sites. This Rickettsia typhi (strain ATCC VR-144 / Wilmington) protein is Small ribosomal subunit protein uS13.